Reading from the N-terminus, the 133-residue chain is uncharacterized protein (133 aa).

A disordered region spans residues Thr107–Val133.

This is an uncharacterized protein from Homo sapiens (Human).